We begin with the raw amino-acid sequence, 533 residues long: Spindle pole body protein CSA6 (533 aa).

2 disordered regions span residues 1–32 and 53–130; these read MEDS…SDLT and DKYD…QEDE. 2 stretches are compositionally biased toward basic and acidic residues: residues 18–30 and 53–68; these read PEIK…KTSD and DKYD…DLTP. The span at 83 to 94 shows a compositional bias: low complexity; that stretch reads PSKFSSSIPQKP. Residues 103–121 are compositionally biased toward polar residues; sequence SSPTKNYTDHINQLRSGPN. Residues 136 to 236 are a coiled coil; it reads KYEIKRLKQE…RSERDELVKD (101 aa). A compositionally biased stretch (basic and acidic residues) spans 309-318; the sequence is EKDKPSEDKT. 2 disordered regions span residues 309 to 329 and 349 to 453; these read EKDK…SKDA and SANS…QSTK. 2 stretches are compositionally biased toward polar residues: residues 349–392 and 405–421; these read SANS…SNSQ and IYSS…QSSH. Residues 432–445 are compositionally biased toward basic and acidic residues; the sequence is PRVERDHWTDRPPS.

It localises to the cytoplasm. The protein resides in the cytoskeleton. Its subcellular location is the microtubule organizing center. It is found in the spindle pole body. Plays a role in mitotic spindle pole body organization, possibly at the point of spindle pole body separation. Required for mitotic exit. The protein is Spindle pole body protein CSA6 of Candida dubliniensis (strain CD36 / ATCC MYA-646 / CBS 7987 / NCPF 3949 / NRRL Y-17841) (Yeast).